We begin with the raw amino-acid sequence, 147 residues long: Zinc finger HIT domain-containing protein 3 (147 aa).

Cys3, Cys6, Cys14, Cys17, Cys22, Cys26, His30, and Cys34 together coordinate Zn(2+). Residues 3–34 (CVICLEKPKYRCPACRVPYCSVACFRKHKEQC) form an HIT-type zinc finger. A disordered region spans residues 45-67 (IRSALPTKTXKPVENKDDDDSIA). Position 72 is a phosphoserine (Ser72).

As to quaternary structure, thyroid receptor interacting proteins (TRIPs) specifically interact with the ligand binding domain of the thyroid receptor (TR). Requires the presence of thyroid hormone for its interaction. Interacts with NUFIP1. Interacts (via HIT-type zinc finger) with the RUVBL1/RUVBL2 complex in the presence of ADP.

The protein resides in the cytoplasm. Its subcellular location is the nucleus. The protein is Zinc finger HIT domain-containing protein 3 (ZNHIT3) of Macaca mulatta (Rhesus macaque).